We begin with the raw amino-acid sequence, 128 residues long: DNA polymerase epsilon subunit 3 (128 aa).

Over residues 98 to 110 (EKKESKASKKDSN) the composition is skewed to basic and acidic residues. Positions 98–128 (EKKESKASKKDSNTAENANASATATAEEAPE) are disordered. A compositionally biased stretch (low complexity) spans 111 to 128 (TAENANASATATAEEAPE).

In terms of assembly, homodimer. Component of the DNA polymerase epsilon complex consisting of four subunits: the catalytic subunit PolE1/DNApol-epsilon255 and the accessory subunits PolE2/DNApol-epsilon58, Chrac-14/DNApolE3 and PolE4. Component of the chromatin accessibility complex (CHRAC), composed of Chrac-14, Chrac-16, Acf and Iswi. Forms an heterodimer with Chrac-16. The Chrac-14/Chrac-16 heterodimer interacts with Acf (via N-terminus). Interacts directly with Iswi and this interaction is further stabilized by association with Chrac-16. Component of the Ada2a-containing (ATAC) complex composed of at least Ada2a, Atac1, Hcf, Ada3, Gcn5, Mocs2B, Charac-14, Atac3, Atac2, NC2beta and wds. Interacts with cid.

The protein localises to the nucleus. Its function is as follows. Accessory component of the DNA polymerase epsilon complex. Participates in DNA repair and in chromosomal DNA replication. Histone-like protein which promotes nucleosome sliding of ATP-dependent nucleosome remodeling complexes. Part of the chromatin-accessibility complex (CHRAC) which uses energy/ATP to increase the general accessibility of DNA in chromatin. As a heterodimer with Chrac-16, binds DNA and facilitates nucleosome sliding by Acf. Has a role in DNA damage response by preventing cid mislocalization to chromatin. The sequence is that of DNA polymerase epsilon subunit 3 from Drosophila melanogaster (Fruit fly).